Consider the following 198-residue polypeptide: Probable GTP-binding protein EngB (198 aa).

In terms of domain architecture, EngB-type G spans 22–196 (NLSEIAFVGR…WNWIKGQAEL (175 aa)). Residues 30-37 (GRSNVGKS), 57-61 (GKTQT), 75-78 (DVPG), 142-145 (TKAD), and 175-177 (FSA) contribute to the GTP site. Residues S37 and T59 each contribute to the Mg(2+) site.

Belongs to the TRAFAC class TrmE-Era-EngA-EngB-Septin-like GTPase superfamily. EngB GTPase family. Mg(2+) serves as cofactor.

Necessary for normal cell division and for the maintenance of normal septation. The protein is Probable GTP-binding protein EngB of Oenococcus oeni (strain ATCC BAA-331 / PSU-1).